The following is a 356-amino-acid chain: 3-dehydroquinate synthase (356 aa).

Residues 106 to 110 (GVVGD), 130 to 131 (TT), Lys143, and Lys152 contribute to the NAD(+) site. Zn(2+)-binding residues include Glu185, His248, and His265.

This sequence belongs to the sugar phosphate cyclases superfamily. Dehydroquinate synthase family. Co(2+) is required as a cofactor. Zn(2+) serves as cofactor. Requires NAD(+) as cofactor.

The protein resides in the cytoplasm. The enzyme catalyses 7-phospho-2-dehydro-3-deoxy-D-arabino-heptonate = 3-dehydroquinate + phosphate. Its pathway is metabolic intermediate biosynthesis; chorismate biosynthesis; chorismate from D-erythrose 4-phosphate and phosphoenolpyruvate: step 2/7. Its function is as follows. Catalyzes the conversion of 3-deoxy-D-arabino-heptulosonate 7-phosphate (DAHP) to dehydroquinate (DHQ). The polypeptide is 3-dehydroquinate synthase (Thermoanaerobacter sp. (strain X514)).